Consider the following 247-residue polypeptide: tRNA pseudouridine synthase A (247 aa).

The Nucleophile role is filled by aspartate 52. Tyrosine 110 contributes to the substrate binding site.

It belongs to the tRNA pseudouridine synthase TruA family. Homodimer.

The catalysed reaction is uridine(38/39/40) in tRNA = pseudouridine(38/39/40) in tRNA. In terms of biological role, formation of pseudouridine at positions 38, 39 and 40 in the anticodon stem and loop of transfer RNAs. The sequence is that of tRNA pseudouridine synthase A from Geobacter sp. (strain M21).